The following is a 524-amino-acid chain: REH2-associated factor 1 (524 aa).

Residues 1–22 (MRRWLVASMAPQLHQLLQPVRR) constitute a mitochondrion transit peptide. Residues 48–70 (ASCPACSRVVHMCDMLTHLITAH) form a C2H2-type 1; atypical zinc finger. Residues 121 to 147 (YMCNWCDRRSDVYATRDKFLKHVADVH) form a C2H2-type 2; atypical zinc finger. Residues 226–249 (FPCELCNRTFNSEIDLLQHLETRH) form a C2H2-type 4 zinc finger. A C2H2-type 3; atypical zinc finger spans residues 286–312 (VICDLCVSSSKVYKMPSALFSHIRFKH). 4 consecutive C2H2-type zinc fingers follow at residues 334 to 357 (FVCT…NSKH), 376 to 399 (WWCH…QNKH), 406 to 429 (HPCP…SLQH), and 443 to 465 (VKCS…AVKH). The segment at 463–524 (VKHHKKDPRA…KTTEVSEVTS (62 aa)) is disordered. Residues 479–500 (APTSASHVAASTSAAVPSEVEA) are compositionally biased toward low complexity.

In terms of assembly, component of the REH2-associated complex (REH2C) composed of helicase REH2, associated factors H2F1 and H2F2, and mRNAs at various editing stages; the formation of the complex is RNA-independent. Within the complex, interacts with REH2; the interaction is direct. Interacts with various editing complexes including the RNA editing core (RECC) complex, the gRNA-binding (GRBC) complex (also known as the MRB1 complex) and the RNA editing mediator (REMC) complex.

It is found in the mitochondrion. Functionally, plays an important role in mitochondrial mRNA editing by promoting the assembly of the mRNA editosome. Facilitates the recruitment of mRNA to the REH2C complex and promotes the interaction between various editing complexes including REH2C, GRBC, REMC and RECC complexes. This is REH2-associated factor 1 from Trypanosoma brucei brucei (strain 927/4 GUTat10.1).